Consider the following 493-residue polypeptide: Cobyric acid synthase (493 aa).

Positions 252–440 (PVKIVVLRLR…IHGIFESDSL (189 aa)) constitute a GATase cobBQ-type domain. Cys333 functions as the Nucleophile in the catalytic mechanism. His432 is a catalytic residue.

The protein belongs to the CobB/CobQ family. CobQ subfamily.

The protein operates within cofactor biosynthesis; adenosylcobalamin biosynthesis. In terms of biological role, catalyzes amidations at positions B, D, E, and G on adenosylcobyrinic A,C-diamide. NH(2) groups are provided by glutamine, and one molecule of ATP is hydrogenolyzed for each amidation. This Thermodesulfovibrio yellowstonii (strain ATCC 51303 / DSM 11347 / YP87) protein is Cobyric acid synthase.